The primary structure comprises 85 residues: Beta-toxin BmKAS (85 aa).

A signal peptide spans 1-19; the sequence is MKTVIFLIVSSLLLIGVKT. An LCN-type CS-alpha/beta domain is found at 20–82; sequence DNGYLLDKYT…LWNYNTNKCN (63 aa). 4 disulfides stabilise this stretch: Cys-31–Cys-81, Cys-35–Cys-56, Cys-42–Cys-63, and Cys-46–Cys-65.

In terms of tissue distribution, expressed by the venom gland.

It localises to the secreted. In terms of biological role, beta toxins bind voltage-independently at site-4 of sodium channels (Nav) and shift the voltage of activation toward more negative potentials thereby affecting sodium channel activation and promoting spontaneous and repetitive firing. It binds to distinct receptor sites of mammal and insect voltage-gated sodium channels. It displays antinociceptive effect in rat models, which is due to its specific modulation of sodium channels of sensory neurons. It also significantly stimulates the binding of [3H]-ryanodine to ryanodine receptors on the sarcoplasmic reticulum of the skeletal muscle through an indirect mechanism. And it promotes noradrenaline release from the rat hippocampus slice. This is Beta-toxin BmKAS from Olivierus martensii (Manchurian scorpion).